A 389-amino-acid chain; its full sequence is Serpin B13 (389 aa).

Belongs to the serpin family. Ov-serpin subfamily.

The protein localises to the cytoplasm. Its function is as follows. May play a role in the proliferation or differentiation of keratinocytes. This chain is Serpin B13 (Serpinb13), found in Mus musculus (Mouse).